An 821-amino-acid chain; its full sequence is MQERYDFKAIEAKWQKKWEELKLYEVDDFSEKPKYYCLEMFPYPSGKLHMGHVRNYSIGDVVARYKRMRGYAVLHPMGWDAFGLPAENAAIKHGNVHPADWTWDNIANMRRQLKELGISYDWRREIATCHPEYYRWTQWLFLQFYKKGLAYKKKAPVNWCPGCQTVLANEQVIDGECERCHSRVEKKELEQWFFKITAYAERLLQDIKKLTGWPEKVKIMQENWIGRSEGAEITFKIKGHEETISVFTTRPDTIFGVTYMVLAPEHPLVEKISRGTQYEKDVLEFKRKMMYLSEIERTAETAEKEGVFTGAYAINPFTGEEIPILLANYVLVEYGTGAVMGVPAHDQRDFLFAKKYNLPIKVVITPPGQELKAEELTEAYTGEGILVNSGEFTGLANKEAIRIITQEAEKRGFGKYRVNYRLRDWLISRQRYWGAPIPVLYCEKCGIVPVPEDQLPVVLPYNVEFRPTGESPLKYVPEFLNATCPECGGPATRETDTMDTFICSSWYYYRYTSPRDKQQPWSKEKVERWLPVDQYIGGVEHAILHLLYSRFFTKVLYDLGLVHVDEPFTNLLTQGMVLKDGAKMSKSKGNVVSPEEIVEKYGADTARLFILFAAPPERDLEWSDQGVEGSFRFLNRVWRLIYQTKDRISDELREFSAKDKELNRLLHATIKKVTEDIEERFNFNTAISAIMELVNGLYQYKEGEINPGLLKEALNKLVILLAPFAPHIAEELWEALGNKQSVHLEKWPEYDEEALITEEVEIVIQVNGKVKDRVMVPRNAAEDELKEIALNTPKIKELTADKKIIKVIIVPEKLINIVVAG.

A 'HIGH' region motif is present at residues 42–52; the sequence is PYPSGKLHMGH. A 'KMSKS' region motif is present at residues 583-587; that stretch reads KMSKS. K586 is a binding site for ATP.

It belongs to the class-I aminoacyl-tRNA synthetase family.

It is found in the cytoplasm. It carries out the reaction tRNA(Leu) + L-leucine + ATP = L-leucyl-tRNA(Leu) + AMP + diphosphate. This Carboxydothermus hydrogenoformans (strain ATCC BAA-161 / DSM 6008 / Z-2901) protein is Leucine--tRNA ligase.